The following is a 220-amino-acid chain: Guanylate kinase (220 aa).

Residues 15-194 form the Guanylate kinase-like domain; that stretch reads GLMLVISSPS…ALDAVQSIVK (180 aa). 22–29 serves as a coordination point for ATP; the sequence is SPSGAGKS.

It belongs to the guanylate kinase family.

The protein localises to the cytoplasm. It catalyses the reaction GMP + ATP = GDP + ADP. In terms of biological role, essential for recycling GMP and indirectly, cGMP. The protein is Guanylate kinase of Rhizobium johnstonii (strain DSM 114642 / LMG 32736 / 3841) (Rhizobium leguminosarum bv. viciae).